The primary structure comprises 157 residues: Ribosome maturation factor RimP (157 aa).

It belongs to the RimP family.

The protein resides in the cytoplasm. Its function is as follows. Required for maturation of 30S ribosomal subunits. This chain is Ribosome maturation factor RimP, found in Levilactobacillus brevis (strain ATCC 367 / BCRC 12310 / CIP 105137 / JCM 1170 / LMG 11437 / NCIMB 947 / NCTC 947) (Lactobacillus brevis).